Consider the following 240-residue polypeptide: RNA polymerase sigma factor SigI (240 aa).

The short motif at 56-69 (DEYSIGLFAFNEAI) is the Polymerase core binding element. The H-T-H motif DNA-binding region spans 194-213 (LKHIEPRVRVSRKTLERHRK).

The protein belongs to the sigma-70 factor family. SigI subfamily. Interacts with RsgI.

The protein resides in the cytoplasm. Its activity is regulated as follows. Negatively regulated by the anti-sigma-I factor RsgI. In terms of biological role, sigma factors are initiation factors that promote the attachment of RNA polymerase to specific initiation sites and are then released. This sigma factor contributes to both stress response and virulence gene expression. This Bacillus anthracis protein is RNA polymerase sigma factor SigI.